The sequence spans 1118 residues: Error-prone DNA polymerase (1118 aa).

Residues 1071–1118 (GPQPMGYAKEVGSDRRSRPEIGNAPARQDLATLSEEAEQVMPKGRNFQ) form a disordered region.

This sequence belongs to the DNA polymerase type-C family. DnaE2 subfamily.

Its subcellular location is the cytoplasm. It catalyses the reaction DNA(n) + a 2'-deoxyribonucleoside 5'-triphosphate = DNA(n+1) + diphosphate. Its function is as follows. DNA polymerase involved in damage-induced mutagenesis and translesion synthesis (TLS). It is not the major replicative DNA polymerase. This chain is Error-prone DNA polymerase, found in Mesorhizobium japonicum (strain LMG 29417 / CECT 9101 / MAFF 303099) (Mesorhizobium loti (strain MAFF 303099)).